The primary structure comprises 101 residues: A-type ATP synthase subunit K (101 aa).

Transmembrane regions (helical) follow at residues 5–25 (WLPF…AQAP), 37–57 (IGAG…VGMA), and 75–95 (ILIF…FAVL).

The protein belongs to the V-ATPase proteolipid subunit family. In terms of assembly, has multiple subunits with at least A(3), B(3), C, D, E, F, H, I and proteolipid K(x). The N-terminus is blocked.

It is found in the cell membrane. Its function is as follows. Component of the A-type ATP synthase that produces ATP from ADP in the presence of a proton gradient across the membrane. The polypeptide is A-type ATP synthase subunit K (Sulfurisphaera tokodaii (strain DSM 16993 / JCM 10545 / NBRC 100140 / 7) (Sulfolobus tokodaii)).